Consider the following 306-residue polypeptide: Agmatinase (306 aa).

The Mn(2+) site is built by His-126, Asp-149, His-151, Asp-153, Asp-230, and Asp-232.

Belongs to the arginase family. Agmatinase subfamily. The cofactor is Mn(2+).

The enzyme catalyses agmatine + H2O = urea + putrescine. It functions in the pathway amine and polyamine biosynthesis; putrescine biosynthesis via agmatine pathway; putrescine from agmatine: step 1/1. In terms of biological role, catalyzes the formation of putrescine from agmatine. The sequence is that of Agmatinase from Escherichia coli O9:H4 (strain HS).